The primary structure comprises 204 residues: Pneumococcal vaccine antigen A (204 aa).

It localises to the cell surface. The protein is Pneumococcal vaccine antigen A (pvaA) of Streptococcus pneumoniae serotype 4 (strain ATCC BAA-334 / TIGR4).